The sequence spans 573 residues: Sulfite reductase [NADPH] hemoprotein beta-component (573 aa).

C436, C442, C481, and C485 together coordinate [4Fe-4S] cluster. C485 contacts siroheme.

The protein belongs to the nitrite and sulfite reductase 4Fe-4S domain family. In terms of assembly, alpha(8)-beta(8). The alpha component is a flavoprotein, the beta component is a hemoprotein. Siroheme is required as a cofactor. [4Fe-4S] cluster serves as cofactor.

The enzyme catalyses hydrogen sulfide + 3 NADP(+) + 3 H2O = sulfite + 3 NADPH + 4 H(+). It participates in sulfur metabolism; hydrogen sulfide biosynthesis; hydrogen sulfide from sulfite (NADPH route): step 1/1. Its function is as follows. Component of the sulfite reductase complex that catalyzes the 6-electron reduction of sulfite to sulfide. This is one of several activities required for the biosynthesis of L-cysteine from sulfate. The protein is Sulfite reductase [NADPH] hemoprotein beta-component of Alteromonas mediterranea (strain DSM 17117 / CIP 110805 / LMG 28347 / Deep ecotype).